We begin with the raw amino-acid sequence, 103 residues long: Large ribosomal subunit protein bL21 (103 aa).

This sequence belongs to the bacterial ribosomal protein bL21 family. As to quaternary structure, part of the 50S ribosomal subunit. Contacts protein L20.

In terms of biological role, this protein binds to 23S rRNA in the presence of protein L20. The protein is Large ribosomal subunit protein bL21 of Salmonella paratyphi A (strain ATCC 9150 / SARB42).